A 129-amino-acid polypeptide reads, in one-letter code: Follitropin subunit beta (129 aa).

Positions 1 to 20 (MKTAQFYIFFFCWKAIWCNG) are cleaved as a signal peptide. Cystine bridges form between Cys-21–Cys-69, Cys-35–Cys-84, Cys-38–Cys-122, Cys-46–Cys-100, Cys-50–Cys-102, and Cys-105–Cys-112. N-linked (GlcNAc...) asparagine glycosylation is found at Asn-25 and Asn-42.

Belongs to the glycoprotein hormones subunit beta family. In terms of assembly, heterodimer. The active follitropin is a heterodimer composed of an alpha chain/CGA shared with other hormones and a unique beta chain/FSHB shown here.

It is found in the secreted. Its function is as follows. Together with the alpha chain CGA constitutes follitropin, the follicle-stimulating hormone, and provides its biological specificity to the hormone heterodimer. Binds FSHR, a G protein-coupled receptor, on target cells to activate downstream signaling pathways. Follitropin is involved in follicle development and spermatogenesis in reproductive organs. The polypeptide is Follitropin subunit beta (FSHB) (Monodelphis domestica (Gray short-tailed opossum)).